A 317-amino-acid chain; its full sequence is Tyrosine--tRNA ligase (317 aa).

Position 33 (Y33) interacts with L-tyrosine. The 'HIGH' region signature appears at P38–H46. Residues Y155, Q159, D162, and Q177 each coordinate L-tyrosine. The 'KMSKS' region signature appears at K211–S215. Residue S214 participates in ATP binding.

This sequence belongs to the class-I aminoacyl-tRNA synthetase family. TyrS type 3 subfamily. As to quaternary structure, homodimer.

The protein localises to the cytoplasm. It catalyses the reaction tRNA(Tyr) + L-tyrosine + ATP = L-tyrosyl-tRNA(Tyr) + AMP + diphosphate + H(+). Its function is as follows. Catalyzes the attachment of tyrosine to tRNA(Tyr) in a two-step reaction: tyrosine is first activated by ATP to form Tyr-AMP and then transferred to the acceptor end of tRNA(Tyr). The polypeptide is Tyrosine--tRNA ligase (Methanococcoides burtonii (strain DSM 6242 / NBRC 107633 / OCM 468 / ACE-M)).